The primary structure comprises 377 residues: tRNA(Met) cytidine acetate ligase (377 aa).

ATP is bound by residues 7-20, Gly-100, Asn-153, and Arg-178; that span reads ITEY…HLFH.

It belongs to the TmcAL family.

It localises to the cytoplasm. It catalyses the reaction cytidine(34) in elongator tRNA(Met) + acetate + ATP = N(4)-acetylcytidine(34) in elongator tRNA(Met) + AMP + diphosphate. In terms of biological role, catalyzes the formation of N(4)-acetylcytidine (ac(4)C) at the wobble position of elongator tRNA(Met), using acetate and ATP as substrates. First activates an acetate ion to form acetyladenylate (Ac-AMP) and then transfers the acetyl group to tRNA to form ac(4)C34. The polypeptide is tRNA(Met) cytidine acetate ligase (Staphylococcus epidermidis (strain ATCC 12228 / FDA PCI 1200)).